The following is a 570-amino-acid chain: Dwarfin sma-4 (570 aa).

The interval 115–134 (SSQASSQPPPTPTVNPTPIP) is disordered. Positions 121-134 (QPPPTPTVNPTPIP) are enriched in pro residues. The MH1 domain maps to 150-273 (QISHVLQCYQ…YERVVSNRIT (124 aa)). Positions 203, 247, 258, and 263 each coordinate Zn(2+). The MH2 domain occupies 350–570 (WCSIIYYELD…LKNSSQFGSS (221 aa)).

Belongs to the dwarfin/SMAD family.

It is found in the cytoplasm. The protein localises to the nucleus. In terms of biological role, involved in TGF-beta pathway. The polypeptide is Dwarfin sma-4 (sma-4) (Caenorhabditis elegans).